The sequence spans 250 residues: Prolactin-7A2 (250 aa).

An N-terminal signal peptide occupies residues 1 to 29; that stretch reads MQLSFSRPRPWTLLLMVVSNLLLWENVSS. N-linked (GlcNAc...) asparagine glycosylation is found at N26, N35, N102, and N134. Cystine bridges form between C100–C215 and C232–C241.

This sequence belongs to the somatotropin/prolactin family. As to expression, expression restricted to placental tissues. Trophoblast giant cells are found to be the major source.

Its subcellular location is the secreted. In Rattus norvegicus (Rat), this protein is Prolactin-7A2 (Prl7a2).